The primary structure comprises 456 residues: Phosphatidylinositol N-acetylglucosaminyltransferase gpi3 subunit (456 aa).

The protein belongs to the glycosyltransferase group 1 family. Glycosyltransferase 4 subfamily. As to quaternary structure, component of a Phosphatidylinositol N-acetylglucosaminyltransferase complex.

The catalysed reaction is a 1,2-diacyl-sn-glycero-3-phospho-(1D-myo-inositol) + UDP-N-acetyl-alpha-D-glucosamine = a 6-(N-acetyl-alpha-D-glucosaminyl)-1-(1,2-diacyl-sn-glycero-3-phospho)-1D-myo-inositol + UDP + H(+). It functions in the pathway glycolipid biosynthesis; glycosylphosphatidylinositol-anchor biosynthesis. Its function is as follows. Catalytic subunit in the complex catalyzing the transfer of N-acetylglucosamine from UDP-N-acetylglucosamine to phosphatidylinositol, the first step of GPI biosynthesis. The chain is Phosphatidylinositol N-acetylglucosaminyltransferase gpi3 subunit (gpi3) from Schizosaccharomyces pombe (strain 972 / ATCC 24843) (Fission yeast).